The following is a 233-amino-acid chain: MEGEEKQQQHKTEDDGIACVAERKVEIKNEKSPGKSTQHPKPCVDRRRVNYAKFIHTNARTYNEPVPYIDNKGPEKQRKWWFHNEAPKHVSQPSYDTKSVQRSDFQKPACPLVLPVKHSRMQKPSCGIVPLTSLDVSGEHENNFVEYISFIHQYDARRTPNEPIKGKKHGTFVQREIKLGAMPIVPKAPEVLLNTLESGSSEQPQKTDKGNSSGDKVTSPGLCQQNSQELLET.

2 stretches are compositionally biased toward basic and acidic residues: residues 1–14 (MEGE…KTED) and 21–33 (AERK…EKSP). Residues 1-45 (MEGEEKQQQHKTEDDGIACVAERKVEIKNEKSPGKSTQHPKPCVD) are disordered. The tract at residues 127–159 (GIVPLTSLDVSGEHENNFVEYISFIHQYDARRT) is mn. The segment at 192 to 233 (LLNTLESGSSEQPQKTDKGNSSGDKVTSPGLCQQNSQELLET) is disordered. Positions 195 to 233 (TLESGSSEQPQKTDKGNSSGDKVTSPGLCQQNSQELLET) are enriched in polar residues.

Its subcellular location is the cell projection. It is found in the cilium. The protein is Ciliary microtubule inner protein 6 (Cimip6) of Mus musculus (Mouse).